Consider the following 536-residue polypeptide: Pre-mRNA-splicing factor SLU7 (536 aa).

The segment at 22-42 is disordered; the sequence is EARKAGLAPAEVDEDGKEINP. A CCHC-type zinc finger spans residues 94-111; it reads GACENCGAMTHDKKSCME. Positions 178–201 are disordered; that stretch reads KLEEKDGEEGDENVASEEEDEEDG. The segment covering 182–200 has biased composition (acidic residues); the sequence is KDGEEGDENVASEEEDEED.

Belongs to the SLU7 family.

The protein resides in the nucleus. Functionally, participates in the second catalytic step of pre-mRNA splicing, when the free hydroxyl group of exon I attacks the 3'-splice site to generate spliced mRNA and the excised lariat intron. This Oryza sativa subsp. indica (Rice) protein is Pre-mRNA-splicing factor SLU7.